Reading from the N-terminus, the 413-residue chain is Tyrosine--tRNA ligase (413 aa).

Tyr-34 lines the L-tyrosine pocket. The 'HIGH' region signature appears at 39–48 (PTSHSLTVGH). L-tyrosine contacts are provided by Tyr-164 and Gln-168. The short motif at 225–229 (KFGKS) is the 'KMSKS' region element. Position 228 (Lys-228) interacts with ATP. The 67-residue stretch at 347 to 413 (ILLVDALVQT…GKKNNALIVF (67 aa)) folds into the S4 RNA-binding domain.

Belongs to the class-I aminoacyl-tRNA synthetase family. TyrS type 1 subfamily. As to quaternary structure, homodimer.

The protein resides in the cytoplasm. The catalysed reaction is tRNA(Tyr) + L-tyrosine + ATP = L-tyrosyl-tRNA(Tyr) + AMP + diphosphate + H(+). Catalyzes the attachment of tyrosine to tRNA(Tyr) in a two-step reaction: tyrosine is first activated by ATP to form Tyr-AMP and then transferred to the acceptor end of tRNA(Tyr). This Aster yellows witches'-broom phytoplasma (strain AYWB) protein is Tyrosine--tRNA ligase.